Here is a 456-residue protein sequence, read N- to C-terminus: Probable hexose phosphate transport protein (456 aa).

Transmembrane regions (helical) follow at residues 34-54 (IFYS…SFTF), 70-90 (LGII…VSGV), 113-133 (IFFG…INGW), 161-181 (VWST…GIAI), 185-205 (GWRG…FILI), 257-277 (YVLS…IYVV), 302-322 (LCVS…GWLS), 331-351 (GPMN…LWGT), 362-382 (AFLF…GLAA), 394-414 (ASGF…YPLG), and 421-441 (GWHG…LFFL).

Belongs to the major facilitator superfamily. Organophosphate:Pi antiporter (OPA) (TC 2.A.1.4) family.

It localises to the cell membrane. In terms of biological role, transport protein for sugar phosphate uptake. The chain is Probable hexose phosphate transport protein from Chlamydia muridarum (strain MoPn / Nigg).